A 205-amino-acid polypeptide reads, in one-letter code: Regulator of G-protein signaling 4 (205 aa).

S-palmitoyl cysteine attachment occurs at residues cysteine 2, cysteine 12, and cysteine 95. The RGS domain occupies 62-178 (SLENLISHEC…LKSRFYLDLV (117 aa)).

In terms of processing, palmitoylated on Cys-2 and/or Cys-12. Post-translationally, phosphorylated by cyclic GMP-dependent protein kinase. As to expression, expressed in brain and heart. Expressed in brain at protein level. Expressed in prefontal and visual cortex. Isoform 4 and isoform 5 are expressed ubiquitously. Isoform 1, isoform 2 and isoform 3 are not expressed in the cerebellum.

In terms of biological role, inhibits signal transduction by increasing the GTPase activity of G protein alpha subunits thereby driving them into their inactive GDP-bound form. Activity on G(z)-alpha is inhibited by phosphorylation of the G-protein. Activity on G(z)-alpha and G(i)-alpha-1 is inhibited by palmitoylation of the G-protein. The polypeptide is Regulator of G-protein signaling 4 (RGS4) (Homo sapiens (Human)).